The primary structure comprises 174 residues: MASQKRSSFRHGSKMASASTTDHARHGSPRHRDSGLLDSLGRFFGGDRHVPRRGFGKDIHAARASHVGSIPQRSQHGRPGDDNPVVHFFKNIVSPRTPPPMQAKGRGLSLTRFSWGGEGHKPGYGSGKFYEHKSAHKGHKGSYHEGQGTLSKIFKLGGSGSRPGSRSGSPVARR.

Residues 1 to 86 are disordered; sequence MASQKRSSFR…GRPGDDNPVV (86 aa). At alanine 2 the chain carries N-acetylalanine; in forms C1, C2 and C3. Glutamine 4 carries the deamidated glutamine; in forms C1 and C2; partial modification. Serine 8 is modified (phosphoserine; in forms C2 and C3). Serine 19 carries the phosphoserine; in form C2 modification. A compositionally biased stretch (basic and acidic residues) spans 22-35; it reads DHARHGSPRHRDSG. Arginine 25 carries the post-translational modification Citrulline; in forms C1, C2 and C3. Serine 34 is subject to Phosphoserine; in forms C2 and C3. Residue arginine 42 is modified to Citrulline; in form C3. Residues 45-61 show a composition bias toward basic and acidic residues; it reads GGDRHVPRRGFGKDIHA. At serine 65 the chain carries Phosphoserine; in forms C2 and C3. Position 72 is a deamidated glutamine; in forms C1, C2 and C3; partial (glutamine 72). At serine 74 the chain carries Phosphoserine; in form C2. Asparagine 91 is modified (deamidated asparagine; in forms C1, C2 and C3; partial). The residue at position 97 (threonine 97) is a Phosphothreonine; in forms C2 and C3. At glutamine 102 the chain carries Deamidated glutamine; in forms C1, C2 and C3; partial. At glutamine 102 the chain carries Deamidated glutamine; in form C1. Residue arginine 106 is modified to Omega-N-methylarginine; in forms C1, C2 and C3; alternate. At arginine 106 the chain carries Symmetric dimethylarginine; in forms C1, C2 and C3; alternate. Phosphoserine; in forms C2 and C3 occurs at positions 114 and 142. The segment at 126–174 is disordered; it reads SGKFYEHKSAHKGHKGSYHEGQGTLSKIFKLGGSGSRPGSRSGSPVARR. Glutamine 147 bears the Deamidated glutamine; in forms C1, C2 and C3; partial mark. Over residues 162 to 174 the composition is skewed to low complexity; it reads RPGSRSGSPVARR. Phosphoserine; in forms C2 and C3 is present on serine 165. Citrulline; in forms C2 and C3 is present on arginine 166. Phosphoserine; in forms C2 and C3 is present on serine 169.

It belongs to the myelin basic protein family. Homodimer. Post-translationally, several charge isomers are produced as a result of optional post-translational modifications, such as phosphorylation of serine or threonine residues, deamidation of glutamine or asparagine residues, citrullination and methylation of arginine residues. Chicken MBP contains 4 charge components denoted as C1, C2, C3 and C8. C1 lacks any phosphorylation sites, whereas C2 and C3 contain respectively 10 and 8 phosphorylation sites and arginine residues modified to citrulline. All three charge components contain deamidated glutamines and asparagine, and a methylated arginine.

It localises to the myelin membrane. Is, with PLP, the most abundant protein component of the myelin membrane in the CNS. Has a role in both the formation and stabilization of this compact multilayer arrangement of bilayers. Each splice variant and charge isomer may have a specialized function in the assembly of an optimized, biochemically functional myelin membrane. The sequence is that of Myelin basic protein (MBP) from Gallus gallus (Chicken).